The following is a 307-amino-acid chain: Membrane protein insertase YidC 2 (307 aa).

The signal sequence occupies residues 1–23 (MKLTLNRILFSGLALSILFTLTG). The N-palmitoyl cysteine moiety is linked to residue C24. Residue C24 is the site of S-diacylglycerol cysteine attachment. 5 helical membrane-spanning segments follow: residues 58-78 (LGYGLAIIIVTIIVRTLILPL), 135-155 (LGGIGCLPLLIQMPFFSAMYF), 179-199 (VLTAIIAALYFFQSWLSMMAV), 209-225 (TMMYTMPIMMIFMSFSL), and 231-251 (LYWLVGGFFSIIQQLITTYLL). The tract at residues 263–307 (YAKNPPKAYQSTSSRKDVTPSQNMEQANLPKKIKSNRNAGKQRKR) is disordered. Residues 271–288 (YQSTSSRKDVTPSQNMEQ) show a composition bias toward polar residues. Residues 293-307 (KKIKSNRNAGKQRKR) are compositionally biased toward basic residues.

It belongs to the OXA1/ALB3/YidC family. Type 2 subfamily.

It is found in the cell membrane. In terms of biological role, required for the insertion and/or proper folding and/or complex formation of integral membrane proteins into the membrane. Involved in integration of membrane proteins that insert both dependently and independently of the Sec translocase complex, as well as at least some lipoproteins. The chain is Membrane protein insertase YidC 2 from Streptococcus pyogenes serotype M3 (strain ATCC BAA-595 / MGAS315).